Consider the following 281-residue polypeptide: Undecaprenyl-diphosphatase (281 aa).

7 helical membrane-spanning segments follow: residues 45–65, 86–106, 114–134, 148–168, 196–216, 224–244, and 256–276; these read AFTN…VVVI, WQLW…GLIF, FQNF…FIYV, LVSL…LSLI, FFLG…KFIV, SQLF…LYVI, and FTFF…YGLM.

This sequence belongs to the UppP family.

It is found in the cell membrane. The enzyme catalyses di-trans,octa-cis-undecaprenyl diphosphate + H2O = di-trans,octa-cis-undecaprenyl phosphate + phosphate + H(+). Functionally, catalyzes the dephosphorylation of undecaprenyl diphosphate (UPP). Confers resistance to bacitracin. This chain is Undecaprenyl-diphosphatase, found in Streptococcus mutans serotype c (strain ATCC 700610 / UA159).